Here is a 256-residue protein sequence, read N- to C-terminus: Matrix protein (256 aa).

An interaction with M2-1 region spans residues 1 to 110 (METYVNKLHE…KLAYDVTTPC (110 aa)). A nuclear targeting and binding to host importin KPNB1 region spans residues 110–183 (CEIKACSLTC…LNSLENIATT (74 aa)). The Nuclear export signal motif lies at 194–206 (IIPYAGLVLVITV). T205 is subject to Phosphothreonine.

The protein belongs to the pneumovirinae M protein family. In terms of assembly, forms dimers. Forms higher-order oligomers. Interacts with glycoprotein G (via N-terminus). Interacts with protein M2-1; this interaction directs the matrix protein localization to cytoplasmic inclusions comprising viral proteins L, N, P, and M2-1 and mediates the matrix protein association with the nucleocapsid. Interacts with host KPNB1; this interaction mediates nuclear import of the matrix protein early during infection. Interacts with host AP3M1; this interaction plays an essential role in trafficking the matrix protein in host cells. Interacts with host CAV1; this interaction probably facilitates viral budding. Interacts with host CFL1; this interaction probably facilitates viral replication. Interacts with host ZNF502; this interaction probably facilitates viral release. Phosphorylation is important for oligomerization.

Its subcellular location is the virion. It is found in the host cytoplasm. The protein localises to the host nucleus. It localises to the host cell membrane. In terms of biological role, plays a crucial role in virus assembly into filaments and budding. Early in infection, localizes in the nucleus where it inhibits host cell transcription through direct binding to host chromatin. Later in infection, traffics to the cytoplasm through the action of host CRM1 to associate with inclusion bodies, the site of viral transcription and replication. During virus assembly and budding, acts as a bridge between the nucleocapsid and the lipid bilayer. The sequence is that of Matrix protein (M) from Human respiratory syncytial virus B (strain B1).